The following is a 453-amino-acid chain: Growth/differentiation factor 9 (453 aa).

The first 25 residues, 1–25, serve as a signal peptide directing secretion; the sequence is MALPNKFFLWFCCFAWLCFPISLDS. A propeptide spanning residues 26–318 is cleaved from the precursor; it reads QPSRGEAQIV…EGVRLSRHRR (293 aa). Residues Asn106, Asn163, Asn236, Asn255, and Asn269 are each glycosylated (N-linked (GlcNAc...) asparagine). Residues 281–300 form a disordered region; the sequence is SLHPKRKPSQDPDQKRGLSA. Asn337 carries an N-linked (GlcNAc...) asparagine glycan. 3 cysteine pairs are disulfide-bonded: Cys352/Cys418, Cys381/Cys450, and Cys385/Cys452.

It belongs to the TGF-beta family. As to quaternary structure, homodimer or heterodimer (Potential). But, in contrast to other members of this family, cannot be disulfide-linked. Phosphorylated; phosphorylation is critical for GDF9 function.

Its subcellular location is the secreted. Required for ovarian folliculogenesis. The sequence is that of Growth/differentiation factor 9 (GDF9) from Bos taurus (Bovine).